Consider the following 185-residue polypeptide: Peptidoglycan-recognition protein SC1a/b (185 aa).

Positions 1-21 are cleaved as a signal peptide; it reads MVSKVALLLAVLVCSQYMAQG. Residues 46-170 enclose the N-acetylmuramoyl-L-alanine amidase domain; the sequence is SYAIIHHTAG…RQVSATECPG (125 aa). Histidine 51 lines the Zn(2+) pocket. Cysteine 58 and cysteine 64 form a disulfide bridge. Zn(2+) contacts are provided by histidine 160 and cysteine 168.

Belongs to the N-acetylmuramoyl-L-alanine amidase 2 family. Zn(2+) is required as a cofactor.

Its subcellular location is the secreted. The enzyme catalyses Hydrolyzes the link between N-acetylmuramoyl residues and L-amino acid residues in certain cell-wall glycopeptides.. N-acetylmuramyl-L-alanine amidase involved in innate immunity by degrading bacterial peptidoglycans (PGN). Plays a scavenger role by digesting biologically active PGN into biologically inactive fragments. Has no direct bacteriolytic activity. The polypeptide is Peptidoglycan-recognition protein SC1a/b (PGRP-SC1a) (Drosophila simulans (Fruit fly)).